Here is a 510-residue protein sequence, read N- to C-terminus: MTTSIIERIDAWAEKTPDFPCYEYAGTRLSYKELKRQSDALGSYLLKNLKTDKEKPIIVYGHMSPLMIIAFLGAIKSGRAYVPVDFSMPVERIEQIKKAADPALFICTEELPENLTITDCPVLNAENLVDALEKHFDEKPDPTSCVKNDDNYYIIYTSGSTGNPKGVQISQNNLVSFSNWILQDFSLQQGLRFLNQAPFSFDLSVMDLYPCLLSGGTLVPMDKTITSNLKDLYHEIPAQSFDVWVSTPSFADLCLLDPNFNQENNPNLTRFLFCGEVLAKKTARELLVRFPDAVIYNTYGPTEATVAVTQVRITAELIDAYPSLPLGVIKPDMRLHIIDQETGDVLPDGEKGEIVLIGASVSKGYLNEPEKTDQVFFDYKGYQAYHTGDSGIIKDGYLFFQGRLDFQIKLHGYRIELEDIENNLKKVSLIQNCAIIPKMKDGKVDMLVAQVIPSPNDFTKEYQLSAAIKNELKEFMPTYMIPRKWIYKTEFPLTMNGKIDRKALNQEVNK.

Position 157–158 (T157–S158) interacts with ATP. Residue D202 coordinates D-alanine. N297–T302 is a binding site for ATP. D-alanine is bound at residue V306. ATP-binding residues include D389 and K498. K498 lines the D-alanine pocket.

This sequence belongs to the ATP-dependent AMP-binding enzyme family. DltA subfamily.

The protein resides in the cytoplasm. The enzyme catalyses holo-[D-alanyl-carrier protein] + D-alanine + ATP = D-alanyl-[D-alanyl-carrier protein] + AMP + diphosphate. The protein operates within cell wall biogenesis; lipoteichoic acid biosynthesis. Catalyzes the first step in the D-alanylation of lipoteichoic acid (LTA), the activation of D-alanine and its transfer onto the D-alanyl carrier protein (Dcp) DltC. In an ATP-dependent two-step reaction, forms a high energy D-alanyl-AMP intermediate, followed by transfer of the D-alanyl residue as a thiol ester to the phosphopantheinyl prosthetic group of the Dcp. D-alanylation of LTA plays an important role in modulating the properties of the cell wall in Gram-positive bacteria, influencing the net charge of the cell wall. In Listeria welshimeri serovar 6b (strain ATCC 35897 / DSM 20650 / CCUG 15529 / CIP 8149 / NCTC 11857 / SLCC 5334 / V8), this protein is D-alanine--D-alanyl carrier protein ligase.